The following is a 403-amino-acid chain: NADH-quinone oxidoreductase subunit D (403 aa).

The protein belongs to the complex I 49 kDa subunit family. NDH-1 is composed of 14 different subunits. Subunits NuoB, C, D, E, F, and G constitute the peripheral sector of the complex.

It localises to the cell inner membrane. It catalyses the reaction a quinone + NADH + 5 H(+)(in) = a quinol + NAD(+) + 4 H(+)(out). In terms of biological role, NDH-1 shuttles electrons from NADH, via FMN and iron-sulfur (Fe-S) centers, to quinones in the respiratory chain. The immediate electron acceptor for the enzyme in this species is believed to be ubiquinone. Couples the redox reaction to proton translocation (for every two electrons transferred, four hydrogen ions are translocated across the cytoplasmic membrane), and thus conserves the redox energy in a proton gradient. The polypeptide is NADH-quinone oxidoreductase subunit D (Pelobacter propionicus (strain DSM 2379 / NBRC 103807 / OttBd1)).